The primary structure comprises 174 residues: Small ribosomal subunit protein uS5 (174 aa).

In terms of domain architecture, S5 DRBM spans 18–81 (WQERVIQIRR…ADGKKHLIDI (64 aa)).

This sequence belongs to the universal ribosomal protein uS5 family. In terms of assembly, part of the 30S ribosomal subunit. Contacts proteins S4 and S8.

With S4 and S12 plays an important role in translational accuracy. Functionally, located at the back of the 30S subunit body where it stabilizes the conformation of the head with respect to the body. The sequence is that of Small ribosomal subunit protein uS5 from Trichormus variabilis (strain ATCC 29413 / PCC 7937) (Anabaena variabilis).